The following is a 417-amino-acid chain: E3 ubiquitin-protein ligase RNF135 (417 aa).

The RING-type zinc finger occupies 21-67 (CIICQGLLDQPTTLPCGHSFCLRCLHDLWVSKRGAVDGCPWACPICR). Disordered regions lie at residues 95 to 118 (EVEA…TVQK) and 143 to 173 (TQRP…SLDS). 2 coiled-coil regions span residues 121–145 (TNVI…QTQR) and 180–204 (SISQ…QGSV). Residues 143–164 (TQRPNLGSGQDNAQGTPPTDSS) show a composition bias toward polar residues. The region spanning 225 to 417 (PDQRRPAPRK…NYLEIKQLNT (193 aa)) is the B30.2/SPRY domain.

Homodimer. Interacts (homodimer) with RIGI (double-stranded RNA-bound oligomeric form); involved in both RIGI ubiquitination, oligomerization into filaments associated with viral RNAs and the bridging of these filaments. Interacts with UBE2D3 and UBE2N; E2 ubiquitin ligases involved in RNF135-mediated ubiquitination of RIGI and activation of the RIG-I signaling pathway. Interacts with PCBP2. Ubiquitously expressed.

It is found in the cytoplasm. Its subcellular location is the stress granule. It catalyses the reaction S-ubiquitinyl-[E2 ubiquitin-conjugating enzyme]-L-cysteine + [acceptor protein]-L-lysine = [E2 ubiquitin-conjugating enzyme]-L-cysteine + N(6)-ubiquitinyl-[acceptor protein]-L-lysine.. It functions in the pathway protein modification; protein ubiquitination. In terms of biological role, E2-dependent E3 ubiquitin-protein ligase that functions as a RIGI coreceptor in the sensing of viral RNAs in cell cytoplasm and the activation of the antiviral innate immune response. Together with the UBE2D3, UBE2N and UB2V1 E2 ligases, catalyzes the 'Lys-63'-linked polyubiquitination of RIGI oligomerized on viral RNAs, an essential step in the activation of the RIG-I signaling pathway. Through a ubiquitin-independent parallel mechanism, which consists in bridging RIGI filaments forming on longer viral RNAs, further activates the RIG-I signaling pathway. This second mechanism that synergizes with the ubiquitin-dependent one would thereby allow an RNA length-dependent regulation of the RIG-I signaling pathway. Associated with the E2 ligase UBE2N, also constitutively synthesizes unanchored 'Lys-63'-linked polyubiquitin chains that may also activate the RIG-I signaling pathway. It is not involved in the innate immune response against DNA viruses. This chain is E3 ubiquitin-protein ligase RNF135, found in Mus musculus (Mouse).